A 469-amino-acid polypeptide reads, in one-letter code: MRVSDPAKLDILPDDACEIRLTIAASECDKYPAKQHARKVASKLGVRDGLIYLVGKATINWGDSDQPRPFRQRRYFYYLSGVDEADCYLTYDIRNDLLTIYVPNFSLQHAIWMGPTLTVEEARQRYDADRFRYYAALRSDLNSWVDQYNKDSPIYVLHSSQKPEISAKELRSREVKDEYEIRMIRKANEISALAHRNILQNIHRMSNESEIEGLFLDTCVSHGAKNQSYEIIAGSGPNAAVLHYVKNDEPLNGRQLVCLDAGAEWNCYASDVTRTIPLGKDWPSSHAKDIYAIVEEMQEECIRRVKPGLRFRDLHELAHIIAIKGLQELGVLKAGTVEEIRRSGASSIFFPHGLGHHVGLEVHDVSEQPITANGHLSREFVPQMSTPLLQEGMVITIEPGVYFNKLALENSRSLPLAKYIDFDKAEQYIPVGGVRIEDDLLVTSTGYENLTMAPKGKEMLEILRGRSKQ.

Residues aspartate 260, aspartate 271, glutamate 398, and glutamate 437 each contribute to the Mn(2+) site.

It belongs to the peptidase M24B family. Mn(2+) is required as a cofactor.

The catalysed reaction is Release of any N-terminal amino acid, including proline, that is linked to proline, even from a dipeptide or tripeptide.. Functionally, catalyzes the removal of a penultimate prolyl residue from the N-termini of peptides. The protein is Probable Xaa-Pro aminopeptidase AN0832 of Emericella nidulans (strain FGSC A4 / ATCC 38163 / CBS 112.46 / NRRL 194 / M139) (Aspergillus nidulans).